A 214-amino-acid polypeptide reads, in one-letter code: Nucleoplasmin-2 (214 aa).

The disordered stretch occupies residues 119–214 (ERYEASDLTW…ARAKKPGFKK (96 aa)). Over residues 127-155 (TWEEEEEEEGEEEEEEEEDDEDEDADISL) the composition is skewed to acidic residues. The segment at 129–152 (EEEEEEEGEEEEEEEEDDEDEDAD) is acidic tract A2. The Bipartite nuclear localization signal motif lies at 165–180 (KRLVPQKQASVAKKKK). Residues 181–197 (LEKEEEEIRASVRDKSP) are compositionally biased toward basic and acidic residues. Over residues 198-214 (VKKAKATARAKKPGFKK) the composition is skewed to basic residues.

Belongs to the nucleoplasmin family. Homopentamer, when bound to H2A-H2B dimers only. Homodecamer of two stacked pentamers, when bound to H2A-H2B dimers and H3-H4 tetramers simultaneously.

It localises to the nucleus. Its function is as follows. Core histones chaperone involved in chromatin reprogramming, specially during fertilization and early embryonic development. Probably involved in sperm DNA decondensation during fertilization. The sequence is that of Nucleoplasmin-2 (NPM2) from Homo sapiens (Human).